Consider the following 162-residue polypeptide: Regulator of ribonuclease activity A (162 aa).

This sequence belongs to the RraA family. Homotrimer. Binds to both RNA-binding sites in the C-terminal region of Rne and to RhlB.

It is found in the cytoplasm. Its function is as follows. Globally modulates RNA abundance by binding to RNase E (Rne) and regulating its endonucleolytic activity. Can modulate Rne action in a substrate-dependent manner by altering the composition of the degradosome. Modulates RNA-binding and helicase activities of the degradosome. The chain is Regulator of ribonuclease activity A from Haemophilus influenzae (strain 86-028NP).